An 848-amino-acid chain; its full sequence is Xylosyltransferase (848 aa).

Residues 1-14 (MSLHRTLRRFLRKW) lie on the Cytoplasmic side of the membrane. Residues 15–35 (KALVYAVSFILLIQAFFTFQS) traverse the membrane as a helical; Signal-anchor for type II membrane protein segment. At 36-843 (SPNLMEEEHL…PKTELISVKP (808 aa)) the chain is on the lumenal side. Cystine bridges form between Cys145-Cys173, Cys189-Cys427, Cys446-Cys459, and Cys448-Cys457. UDP-alpha-D-xylose-binding positions include Val219, Asp247, and 276–278 (TIW). N-linked (GlcNAc...) asparagine glycosylation occurs at Asn306. Position 379–380 (379–380 (DW)) interacts with UDP-alpha-D-xylose. Residues Ser460 and 482–483 (RK) contribute to the UDP-alpha-D-xylose site. 2 disulfides stabilise this stretch: Cys529/Cys811 and Cys794/Cys822. Asn530 carries N-linked (GlcNAc...) asparagine glycosylation. The segment at 824-848 (NTNWSSLSPDPKTELISVKPDGRIR) is disordered. The N-linked (GlcNAc...) asparagine glycan is linked to Asn826.

This sequence belongs to the glycosyltransferase 14 family. XylT subfamily. A divalent metal cation serves as cofactor.

It localises to the endoplasmic reticulum membrane. The protein localises to the golgi apparatus membrane. It catalyses the reaction UDP-alpha-D-xylose + L-seryl-[protein] = 3-O-(beta-D-xylosyl)-L-seryl-[protein] + UDP + H(+). Its pathway is glycan metabolism; chondroitin sulfate biosynthesis. The protein operates within glycan metabolism; heparan sulfate biosynthesis. Catalyzes the first step in biosynthesis of glycosaminoglycan. Transfers D-xylose from UDP-D-xylose to specific serine residues of the core protein. Initial enzyme in the biosynthesis of chondroitin sulfate and dermatan sulfate proteoglycans in fibroblasts and chondrocytes. In Ciona intestinalis (Transparent sea squirt), this protein is Xylosyltransferase (xt).